The primary structure comprises 64 residues: NSGNPCCDPVTCKPRRGEHCVSGPCCRNCKFLNAGTICKYARGDDMNDYCTGISSDCPRNPYKD.

One can recognise a Disintegrin domain in the interval 1-64 (NSGNPCCDPV…SDCPRNPYKD (64 aa)). Cystine bridges form between Cys-6–Cys-29, Cys-20–Cys-26, Cys-25–Cys-50, and Cys-38–Cys-57. The Cell attachment site motif lies at 42–44 (RGD).

It belongs to the disintegrin family. Dimeric disintegrin subfamily. As to quaternary structure, heterodimer with VB7B; disulfide-linked. As to expression, expressed by the venom gland.

Its subcellular location is the secreted. Functionally, poor inhibitor of platelet aggregation. The disintegrin inhibits the adhesion of cells expressing the RGD-dependent integrin alpha-5/beta-1 (ITGA5/ITGB1) to immobilized fibronectin. Inhibition on alpha-2b/beta-3 (ITGA2B/ITGB3) is low. The protein is Disintegrin VB7A of Vipera berus berus (Common viper).